Here is a 343-residue protein sequence, read N- to C-terminus: Heat-inducible transcription repressor HrcA (343 aa).

The protein belongs to the HrcA family.

Functionally, negative regulator of class I heat shock genes (grpE-dnaK-dnaJ and groELS operons). Prevents heat-shock induction of these operons. This Mycobacterium avium (strain 104) protein is Heat-inducible transcription repressor HrcA.